The chain runs to 862 residues: Piwi-like protein 1 (862 aa).

Over residues M1–A13 the composition is skewed to basic residues. The tract at residues M1 to G48 is disordered. An Omega-N-methylarginine; by PRMT5; alternate modification is found at R14. R14 carries the symmetric dimethylarginine; by PRMT5; alternate modification. The residue at position 49 (R49) is an Omega-N-methylarginine; by PRMT5. Position 53 is an omega-N-methylarginine; alternate (R53). Residue R53 is modified to Symmetric dimethylarginine; alternate. The short motif at R218 to N225 is the D-box element. Residues T279 to G392 form the PAZ domain. The segment at T317–R319 is required for binding 2'-O-methylated 3'-end of piRNAs. R371 is modified (omega-N-methylarginine; by PRMT5). The MID region stretch occupies residues S480–E616. One can recognise a Piwi domain in the interval I556–H848. Catalysis depends on residues D633, E671, D703, and H837.

It belongs to the argonaute family. Piwi subfamily. In terms of assembly, interacts (via Piwi domain) with DICER1, suggesting that it forms ribonucleoprotein RISC complexes; this interaction is regulated by HSP90AB1 activity. Interacts with MAEL, KIF17, PABPC1, PRMT5 and WDR77. Interacts (when methylated on arginine residues) with TDRD1, TDRKH/TDRD2, RNF17/TDRD4, TDRD6, TDRD7 and TDRD9. Interacts with CLOCK. Interacts with MOV10L1. Interacts with ANAPC10; interaction oly takes place following piRNA-binding. Interacts with RNF8; leading to sequester RNF8 in the cytoplasm. Interacts with Tex19.1 and, probably, Tex19.2. The cofactor is Mg(2+). Post-translationally, ubiquitinated by the anaphase promoting complex/cyclosome (APC/C) in late spermatids, leading to its degradation. Ubiquitination only takes place following piRNA-binding in adult testis. Ubiquitination and degradation in late spermatogenesis by APC/C is probably required to release RNF8 from the cytoplasm and promote histone to protamine exchange by RNF8. In terms of processing, arginine methylation by PRMT5 is required for the interaction with Tudor domain-containing protein (TDRD1, TDRKH/TDRD2, RNF17/TDRD4, TDRD6, TDRD7 and TDRD9) and subsequent localization to the meiotic nuage, also named P granule. In terms of tissue distribution, expressed in brain. Expressed in testis, specifically in spermatocytes (at protein level). Only detected in germ lineage cells of adult testis. Expressed in male gonads 2 weeks after birth at the initiation of spermatogenesis, but not expressed in female gonads.

The protein localises to the cytoplasm. Its function is as follows. Endoribonuclease that plays a central role in postnatal germ cells by repressing transposable elements and preventing their mobilization, which is essential for the germline integrity. Acts via the piRNA metabolic process, which mediates the repression of transposable elements during meiosis by forming complexes composed of piRNAs and Piwi proteins and governs the methylation and subsequent repression of transposons. Directly binds methylated piRNAs, a class of 24 to 30 nucleotide RNAs that are generated by a Dicer-independent mechanism and are primarily derived from transposons and other repeated sequence elements. Strongly prefers a uridine in the first position of their guide (g1U preference, also named 1U-bias). Not involved in the piRNA amplification loop, also named ping-pong amplification cycle. Acts as an endoribonuclease that cleaves transposon messenger RNAs. Besides their function in transposable elements repression, piRNAs are probably involved in other processes during meiosis such as translation regulation. Probable component of some RISC complex, which mediates RNA cleavage and translational silencing. Also plays a role in the formation of chromatoid bodies and is required for some miRNAs stability. Required to sequester RNF8 in the cytoplasm until late spermatogenesis; RNF8 being released upon ubiquitination and degradation of PIWIL1. The polypeptide is Piwi-like protein 1 (Mus musculus (Mouse)).